The sequence spans 108 residues: Glutaredoxin 4 (108 aa).

Positions F4–Y106 constitute a Glutaredoxin domain. K21 contacts glutathione. C29 contributes to the [2Fe-2S] cluster binding site. Glutathione is bound by residues R58, F70, and C83–S84.

The protein belongs to the glutaredoxin family. Monothiol subfamily. In terms of assembly, homodimer.

It localises to the cytoplasm. Its function is as follows. Monothiol glutaredoxin involved in the biogenesis of iron-sulfur clusters. In Buchnera aphidicola subsp. Acyrthosiphon pisum (strain APS) (Acyrthosiphon pisum symbiotic bacterium), this protein is Glutaredoxin 4 (grxD).